Reading from the N-terminus, the 98-residue chain is MTLFSSISSMSSSMTSSRSSFSSFGSGTSMGSNSIACSVGSGGGGCGSGSGGCGDLTGGAKSSGGSCGGKGGPHNHGHGNGHGPHGHGGKGSGGSCSC.

Disordered regions lie at residues 1-29 (MTLF…SGTS) and 60-98 (AKSS…SCSC). Residues 60–72 (AKSSGGSCGGKGG) show a composition bias toward gly residues. Over residues 73-88 (PHNHGHGNGHGPHGHG) the composition is skewed to basic residues. Residues 89 to 98 (GKGSGGSCSC) are compositionally biased toward gly residues.

The protein belongs to the hssA/B family.

The protein is HssA/B-like protein 33 (hssl33) of Dictyostelium discoideum (Social amoeba).